Reading from the N-terminus, the 387-residue chain is Phosphoglycerate kinase (387 aa).

Residues 21–23 (DLN), arginine 36, 59–62 (HLGR), arginine 113, and arginine 146 each bind substrate. ATP-binding positions include lysine 197, glutamate 314, and 340 to 343 (GGDT).

This sequence belongs to the phosphoglycerate kinase family. As to quaternary structure, monomer.

It localises to the cytoplasm. It carries out the reaction (2R)-3-phosphoglycerate + ATP = (2R)-3-phospho-glyceroyl phosphate + ADP. The protein operates within carbohydrate degradation; glycolysis; pyruvate from D-glyceraldehyde 3-phosphate: step 2/5. The polypeptide is Phosphoglycerate kinase (Pseudomonas fluorescens (strain ATCC BAA-477 / NRRL B-23932 / Pf-5)).